The following is a 324-amino-acid chain: Myoblast determination protein 1 homolog (324 aa).

The disordered stretch occupies residues 125–146 (VDSQHEDTTTSTAGGAGVGGPR). A bHLH domain is found at 155–206 (DRRKAATMRERRRLRKVNEAFEVVKQRTCPNPNQRLPKVEILRSAIDYINNL). Residues 251 to 272 (YNPENMFDDDDLTDSDDDRDHH) form a disordered region. A compositionally biased stretch (acidic residues) spans 256–267 (MFDDDDLTDSDD).

Efficient DNA binding requires dimerization with another bHLH protein. In terms of tissue distribution, body wall muscle cells; in clonal muscle precursors, in a set of early embryonic blastomeres (the ms-granddaughters), and in six glial-like cells called GLRS.

It localises to the nucleus. In terms of biological role, involved in myogenesis, in cooperation with transcription factors unc-120 and hnd-1. Acts redundantly with fozi-1 to promote body wall muscle cell and coelomocyte specification in postembryonic mesoderm progenitors, probably through suppression of sem-2. The polypeptide is Myoblast determination protein 1 homolog (Caenorhabditis elegans).